The sequence spans 414 residues: Serine hydroxymethyltransferase (414 aa).

(6S)-5,6,7,8-tetrahydrofolate is bound by residues Leu116 and Gly120–Leu122. Lys224 carries the post-translational modification N6-(pyridoxal phosphate)lysine. Residues Glu240 and Ser348–Phe350 contribute to the (6S)-5,6,7,8-tetrahydrofolate site.

Belongs to the SHMT family. As to quaternary structure, homodimer. Pyridoxal 5'-phosphate is required as a cofactor.

The protein resides in the cytoplasm. It carries out the reaction (6R)-5,10-methylene-5,6,7,8-tetrahydrofolate + glycine + H2O = (6S)-5,6,7,8-tetrahydrofolate + L-serine. It participates in one-carbon metabolism; tetrahydrofolate interconversion. The protein operates within amino-acid biosynthesis; glycine biosynthesis; glycine from L-serine: step 1/1. Catalyzes the reversible interconversion of serine and glycine with tetrahydrofolate (THF) serving as the one-carbon carrier. This reaction serves as the major source of one-carbon groups required for the biosynthesis of purines, thymidylate, methionine, and other important biomolecules. Also exhibits THF-independent aldolase activity toward beta-hydroxyamino acids, producing glycine and aldehydes, via a retro-aldol mechanism. The sequence is that of Serine hydroxymethyltransferase from Campylobacter jejuni subsp. jejuni serotype O:2 (strain ATCC 700819 / NCTC 11168).